A 183-amino-acid chain; its full sequence is MTATAQQLEYLKNSIQSIEDYPKPGILFRDVTSLLEDPKAYALSIELLTERYKDAGITKVVGTEARGFLFGAPVALALGVGFVPVRKPRKLPRETIAETYELEYGTDQLEIHVDAIKPGDKVLVVDDLLATGGTIDATVKLIRRLGGEVHDAAFIINLFDLGGEQRLEKLGIHCYSLVPFPGH.

It belongs to the purine/pyrimidine phosphoribosyltransferase family. In terms of assembly, homodimer.

It is found in the cytoplasm. The enzyme catalyses AMP + diphosphate = 5-phospho-alpha-D-ribose 1-diphosphate + adenine. Its pathway is purine metabolism; AMP biosynthesis via salvage pathway; AMP from adenine: step 1/1. Functionally, catalyzes a salvage reaction resulting in the formation of AMP, that is energically less costly than de novo synthesis. The sequence is that of Adenine phosphoribosyltransferase from Klebsiella pneumoniae subsp. pneumoniae (strain ATCC 700721 / MGH 78578).